Consider the following 372-residue polypeptide: Dual-specificity RNA methyltransferase RlmN (372 aa).

Catalysis depends on Glu-92, which acts as the Proton acceptor. Positions 98-337 (ETDRATLCVS…VILRKTRGDD (240 aa)) constitute a Radical SAM core domain. Cys-105 and Cys-342 are disulfide-bonded. [4Fe-4S] cluster-binding residues include Cys-112, Cys-116, and Cys-119. Residues 166–167 (GE), Ser-198, 220–222 (SLH), and Asn-299 each bind S-adenosyl-L-methionine. Cys-342 serves as the catalytic S-methylcysteine intermediate.

Belongs to the radical SAM superfamily. RlmN family. [4Fe-4S] cluster is required as a cofactor.

The protein localises to the cytoplasm. The catalysed reaction is adenosine(2503) in 23S rRNA + 2 reduced [2Fe-2S]-[ferredoxin] + 2 S-adenosyl-L-methionine = 2-methyladenosine(2503) in 23S rRNA + 5'-deoxyadenosine + L-methionine + 2 oxidized [2Fe-2S]-[ferredoxin] + S-adenosyl-L-homocysteine. It carries out the reaction adenosine(37) in tRNA + 2 reduced [2Fe-2S]-[ferredoxin] + 2 S-adenosyl-L-methionine = 2-methyladenosine(37) in tRNA + 5'-deoxyadenosine + L-methionine + 2 oxidized [2Fe-2S]-[ferredoxin] + S-adenosyl-L-homocysteine. Its function is as follows. Specifically methylates position 2 of adenine 2503 in 23S rRNA and position 2 of adenine 37 in tRNAs. m2A2503 modification seems to play a crucial role in the proofreading step occurring at the peptidyl transferase center and thus would serve to optimize ribosomal fidelity. This chain is Dual-specificity RNA methyltransferase RlmN, found in Histophilus somni (strain 129Pt) (Haemophilus somnus).